The chain runs to 117 residues: Large ribosomal subunit protein bL19 (117 aa).

The protein belongs to the bacterial ribosomal protein bL19 family.

This protein is located at the 30S-50S ribosomal subunit interface and may play a role in the structure and function of the aminoacyl-tRNA binding site. This Vibrio cholerae serotype O1 (strain ATCC 39541 / Classical Ogawa 395 / O395) protein is Large ribosomal subunit protein bL19.